The chain runs to 262 residues: 7alpha-hydroxysteroid dehydrogenase (262 aa).

Residues 13–18, Arg-38, 63–64, and Asn-90 contribute to the NADP(+) site; these read SSTRGI and NA. Thr-145 and Tyr-158 together coordinate taurochenodeoxycholate. NADP(+) contacts are provided by residues Tyr-158, Lys-162, and 191–195; that span reads IGTRA. The active-site Proton acceptor is Tyr-158.

This sequence belongs to the short-chain dehydrogenases/reductases (SDR) family. As to quaternary structure, homotetramer. A dynamic equilibrium between dimers and tetramers seems to exist.

It carries out the reaction cholate + NADP(+) = 3alpha,12alpha-dihydroxy-7-oxo-5beta-cholanate + NADPH + H(+). The enzyme catalyses chenodeoxycholate + NADP(+) = 7-oxolithocholate + NADPH + H(+). It catalyses the reaction 3alpha,7alpha-dihydroxy-12-oxo-5beta-cholanate + NADP(+) = 7,12-dioxo-lithocholate + NADPH + H(+). The catalysed reaction is 7alpha-hydroxy-3,12-dioxo-5beta-cholanate + NADP(+) = dehydrocholate + NADPH + H(+). It carries out the reaction glycochenodeoxycholate + NADP(+) = 7-oxoglycolithocholate + NADPH + H(+). The enzyme catalyses taurochenodeoxycholate + NADP(+) = 7-oxotaurolithocholate + NADPH + H(+). Its activity is regulated as follows. Activated by metal ions such as Mg(2+), Na(+) and K(+). 7alpha-hydroxysteroid dehydrogenase that catalyzes the NADP(+)-dependent oxidation of the 7alpha-hydroxy group of 7alpha-hydroxysteroids, such as cholate, chenodeoxycholate, glycochenodeoxycholate and taurochenodeoxycholate, to the corresponding 7-oxosteroids. Is also able to catalyze the reverse reduction reactions. Together with 7beta-HSDH encoded in the adjacent gene, is likely involved in the epimerization of the hydroxy group at C-7 of primary bile acids through 7-keto bile acid intermediates. In Clostridium sardiniense (Clostridium absonum), this protein is 7alpha-hydroxysteroid dehydrogenase.